The sequence spans 156 residues: Small ribosomal subunit protein uS7 (156 aa).

Belongs to the universal ribosomal protein uS7 family. Part of the 30S ribosomal subunit. Contacts proteins S9 and S11.

One of the primary rRNA binding proteins, it binds directly to 16S rRNA where it nucleates assembly of the head domain of the 30S subunit. Is located at the subunit interface close to the decoding center, probably blocks exit of the E-site tRNA. This is Small ribosomal subunit protein uS7 from Aliivibrio salmonicida (strain LFI1238) (Vibrio salmonicida (strain LFI1238)).